The chain runs to 367 residues: Phosphoribosylaminoimidazole-succinocarboxamide synthase (367 aa).

It belongs to the SAICAR synthetase family.

The enzyme catalyses 5-amino-1-(5-phospho-D-ribosyl)imidazole-4-carboxylate + L-aspartate + ATP = (2S)-2-[5-amino-1-(5-phospho-beta-D-ribosyl)imidazole-4-carboxamido]succinate + ADP + phosphate + 2 H(+). It participates in purine metabolism; IMP biosynthesis via de novo pathway; 5-amino-1-(5-phospho-D-ribosyl)imidazole-4-carboxamide from 5-amino-1-(5-phospho-D-ribosyl)imidazole-4-carboxylate: step 1/2. The polypeptide is Phosphoribosylaminoimidazole-succinocarboxamide synthase (Vibrio vulnificus (strain CMCP6)).